The chain runs to 107 residues: MEKVLVLLLVALSVAYAAPGPRGIVINLEEGELCLNSAQCKSGCCHHSSALSLARCAPKASENSECSPQTIYGVYYKCPCERGLTCEGDKSIVGSITNTNFGVCLDV.

The N-terminal stretch at 1-17 (MEKVLVLLLVALSVAYA) is a signal peptide. A propeptide spans 18 to 22 (APGPR) (enterostatin, activation peptide). 5 disulfide bridges follow: cysteine 34–cysteine 45, cysteine 40–cysteine 56, cysteine 44–cysteine 78, cysteine 66–cysteine 86, and cysteine 80–cysteine 104.

It belongs to the colipase family. Forms a 1:1 stoichiometric complex with pancreatic lipase. Expressed by the pancreas.

The protein resides in the secreted. Its function is as follows. Colipase is a cofactor of pancreatic lipase. It allows the lipase to anchor itself to the lipid-water interface. Without colipase the enzyme is washed off by bile salts, which have an inhibitory effect on the lipase. Enterostatin has a biological activity as a satiety signal. This chain is Colipase (CLPS), found in Oryctolagus cuniculus (Rabbit).